The primary structure comprises 441 residues: MNPGYSSTASQPGHNPSALPHDVHHALPAIGHPGSYHASMPQLPSIPPSMPPHYSDQYGMMQQPQDQPAPSSTTEGGAETKPSADAVARTQKKLQPHVGEQDGRKYRLDVVQQPKRARMCGFGDKDRRPITPPPCIRLIVTDAVTGKEIDCNEIEHTMYVLNVDLWSEDAQQEVNLVRHTSATPSISSTTPASFAQIDSTPPAFAQIPGTNREMPSYPQSQAYAPSVTPFAQQGGYGQQAISPVGPHYGMVANTYGGQGGYTYASPTDMHPHQLGSQVGPYGPRIFNGAPDMGMHQRMALQGTHQGAPPQGMFTRNLIGSLSASAFRLNDPQEKIGIWFVLQDLSVRTEGIFRLRFSYVNVGAPTRTPNGGPANQTSILNTGKAPILASCFSDAFQVYSAKKFPGVCESTPLSKCFAGQGIKIPIRKAEGGGKNNDDDDDY.

Composition is skewed to polar residues over residues 1–14 and 60–75; these read MNPGYSSTASQPGH and MMQQPQDQPAPSSTTE. The disordered stretch occupies residues 1–104; that stretch reads MNPGYSSTAS…QPHVGEQDGR (104 aa). In terms of domain architecture, Velvet spans 100–426; sequence EQDGRKYRLD…AGQGIKIPIR (327 aa).

The protein belongs to the velvet family. VelB subfamily. As to quaternary structure, component of the heterotrimeric velvet complex composed of LAEA, VEA and VELB; VEA acting as a bridging protein between LAEA and VELB. Forms a heterodimeric complex with VOSA; the formation of the VELB-VOSA complex is light-dependent.

Its subcellular location is the nucleus. It localises to the cytoplasm. Its function is as follows. Component of the velvet transcription factor complex that controls sexual/asexual developmental ratio in response to light, promoting sexual development in the darkness while stimulating asexual sporulation under illumination. The velvet complex acts as a global regulator for secondary metabolite gene expression. Component of the VELB-VOSA heterodimeric complex that plays a dual role in activating genes associated with spore maturation and repressing certain development-associated genes. The VELB-VOSA complex binds DNA through the DNA-binding domain of VOSA that recognizes an 11-nucleotide consensus sequence 5'-CTGGCCGCGGC-3' consisting of two motifs in the promoters of key developmental regulatory genes. Involved in the regulation of the response to eactive oxygen species (ROS) stress. The polypeptide is Velvet complex subunit B (Pyricularia oryzae (strain 70-15 / ATCC MYA-4617 / FGSC 8958) (Rice blast fungus)).